The chain runs to 338 residues: RNA 3'-terminal phosphate cyclase (338 aa).

Residues Q103 and 283 to 287 (YLADQ) contribute to the ATP site. H308 functions as the Tele-AMP-histidine intermediate in the catalytic mechanism.

This sequence belongs to the RNA 3'-terminal cyclase family. Type 1 subfamily.

It is found in the cytoplasm. It carries out the reaction a 3'-end 3'-phospho-ribonucleotide-RNA + ATP = a 3'-end 2',3'-cyclophospho-ribonucleotide-RNA + AMP + diphosphate. Its function is as follows. Catalyzes the conversion of 3'-phosphate to a 2',3'-cyclic phosphodiester at the end of RNA. The mechanism of action of the enzyme occurs in 3 steps: (A) adenylation of the enzyme by ATP; (B) transfer of adenylate to an RNA-N3'P to produce RNA-N3'PP5'A; (C) and attack of the adjacent 2'-hydroxyl on the 3'-phosphorus in the diester linkage to produce the cyclic end product. The biological role of this enzyme is unknown but it is likely to function in some aspects of cellular RNA processing. The polypeptide is RNA 3'-terminal phosphate cyclase (Escherichia coli (strain SMS-3-5 / SECEC)).